Consider the following 527-residue polypeptide: Arginine--tRNA ligase (527 aa).

The 'HIGH' region motif lies at 112–122 (ANPTGPLHIGH).

This sequence belongs to the class-I aminoacyl-tRNA synthetase family. In terms of assembly, monomer.

The protein localises to the cytoplasm. It carries out the reaction tRNA(Arg) + L-arginine + ATP = L-arginyl-tRNA(Arg) + AMP + diphosphate. This is Arginine--tRNA ligase from Nitratiruptor sp. (strain SB155-2).